The primary structure comprises 428 residues: Divalent metal cation transporter MntH (428 aa).

A run of 11 helical transmembrane segments spans residues Trp-33–Ala-53, Ala-60–Val-80, Gln-114–Leu-134, Ile-136–Leu-156, Val-171–Thr-191, Ser-210–His-230, Val-258–Leu-278, Thr-299–Ser-319, Leu-334–Leu-356, Thr-365–Val-385, and Val-406–Val-426.

It belongs to the NRAMP family.

It localises to the cell membrane. In terms of biological role, h(+)-stimulated, divalent metal cation uptake system. Transports zinc and iron. Can also interact with manganese and copper. The sequence is that of Divalent metal cation transporter MntH from Mycobacterium tuberculosis (strain CDC 1551 / Oshkosh).